A 663-amino-acid chain; its full sequence is Methionine--tRNA ligase (663 aa).

A 'HIGH' region motif is present at residues 10 to 20 (AYTNGPLHLGH). The Zn(2+) site is built by Cys-142, Cys-145, Cys-154, and Cys-157. The 'KMSKS' region motif lies at 323–327 (KMSTS). Residue Thr-326 coordinates ATP. A tRNA-binding domain is found at 563 to 663 (YFGNVDLRVG…RDLPVGSKIH (101 aa)).

The protein belongs to the class-I aminoacyl-tRNA synthetase family. MetG type 1 subfamily. As to quaternary structure, homodimer. It depends on Zn(2+) as a cofactor.

It localises to the cytoplasm. It carries out the reaction tRNA(Met) + L-methionine + ATP = L-methionyl-tRNA(Met) + AMP + diphosphate. In terms of biological role, is required not only for elongation of protein synthesis but also for the initiation of all mRNA translation through initiator tRNA(fMet) aminoacylation. The chain is Methionine--tRNA ligase from Methanococcus maripaludis (strain C7 / ATCC BAA-1331).